The chain runs to 312 residues: RNA pseudouridylate synthase domain-containing protein 1 (312 aa).

Position 1 is an N-acetylmethionine (Met-1). Residue Asp-67 is part of the active site. Positions 256–298 are disordered; the sequence is ATPDPDPEDRGPRPGSPSALLPGPGRPPPPPTKPPETEAQRGP. Positions 279–289 are enriched in pro residues; the sequence is PGRPPPPPTKP.

The protein belongs to the pseudouridine synthase RluA family.

This is RNA pseudouridylate synthase domain-containing protein 1 (RPUSD1) from Homo sapiens (Human).